Reading from the N-terminus, the 382-residue chain is Sialidase (382 aa).

Position 37 (arginine 37) interacts with substrate. Aspartate 62 functions as the Proton acceptor in the catalytic mechanism. BNR repeat units follow at residues 71-82, 140-151, and 208-219; these read ARSTDFGKTWSY, IYSDDNGLTWSN, and IYSKDNGETWTM. Arginine 245 contacts substrate. Residues 255 to 266 form a BNR 4 repeat; sequence YISHDLGTTWEI. Residue tyrosine 347 is the Nucleophile of the active site.

The protein belongs to the glycosyl hydrolase 33 family.

It is found in the secreted. The enzyme catalyses Hydrolysis of alpha-(2-&gt;3)-, alpha-(2-&gt;6)-, alpha-(2-&gt;8)- glycosidic linkages of terminal sialic acid residues in oligosaccharides, glycoproteins, glycolipids, colominic acid and synthetic substrates.. Functionally, sialidases have been suggested to be pathogenic factors in microbial infections. This is Sialidase (nanH) from Clostridium perfringens.